We begin with the raw amino-acid sequence, 458 residues long: ATP synthase subunit beta (458 aa).

Position 148–155 (Gly148–Thr155) interacts with ATP.

The protein belongs to the ATPase alpha/beta chains family. F-type ATPases have 2 components, CF(1) - the catalytic core - and CF(0) - the membrane proton channel. CF(1) has five subunits: alpha(3), beta(3), gamma(1), delta(1), epsilon(1). CF(0) has three main subunits: a(1), b(2) and c(9-12). The alpha and beta chains form an alternating ring which encloses part of the gamma chain. CF(1) is attached to CF(0) by a central stalk formed by the gamma and epsilon chains, while a peripheral stalk is formed by the delta and b chains.

Its subcellular location is the cell inner membrane. The catalysed reaction is ATP + H2O + 4 H(+)(in) = ADP + phosphate + 5 H(+)(out). Its function is as follows. Produces ATP from ADP in the presence of a proton gradient across the membrane. The catalytic sites are hosted primarily by the beta subunits. This chain is ATP synthase subunit beta, found in Halorhodospira halophila (strain DSM 244 / SL1) (Ectothiorhodospira halophila (strain DSM 244 / SL1)).